A 153-amino-acid chain; its full sequence is MKFSTIFGATTVMTAVSAAAVSSVMTTKTITATNGNNVYTKVVTDTADPIISYSTTRTVVVSNSDATYTKVVTEGPDTTSEKSTTKTLTLTNGSGSSTNLYTKTVTQAVESSTSSSSSSSSSSSSASSSGAAPAAFQGASVGALALGLISYLL.

An N-terminal signal peptide occupies residues 1–18; sequence MKFSTIFGATTVMTAVSA. The segment at 73–98 is disordered; that stretch reads TEGPDTTSEKSTTKTLTLTNGSGSST. Low complexity predominate over residues 85–98; the sequence is TKTLTLTNGSGSST. Residue Asn92 is glycosylated (N-linked (GlcNAc...) asparagine). The GPI-anchor amidated glycine moiety is linked to residue Gly130. Residues 131-153 constitute a propeptide, removed in mature form; the sequence is AAPAAFQGASVGALALGLISYLL.

The GPI-anchor is attached to the protein in the endoplasmic reticulum and serves to target the protein to the cell surface. There, the glucosamine-inositol phospholipid moiety is cleaved off and the GPI-modified mannoprotein is covalently attached via its lipidless GPI glycan remnant to the 1,6-beta-glucan of the outer cell wall layer.

It localises to the secreted. It is found in the cell wall. The protein localises to the membrane. In terms of biological role, involved in the uptake of non-siderophore and siderophore sources of iron. Has a role in the retention of iron in the cell wall and periplasmic space. This chain is Facilitator of iron transport 2 (FIT2), found in Saccharomyces cerevisiae (strain ATCC 204508 / S288c) (Baker's yeast).